The following is a 476-amino-acid chain: Cysteine--tRNA ligase (476 aa).

Zn(2+) is bound at residue cysteine 27. The 'HIGH' region signature appears at 29-39; that stretch reads PTTYNYIHLGN. Residues cysteine 207, histidine 232, and glutamate 236 each contribute to the Zn(2+) site. A 'KMSKS' region motif is present at residues 264–268; it reads KMSKS. An ATP-binding site is contributed by lysine 267.

This sequence belongs to the class-I aminoacyl-tRNA synthetase family. Monomer. Requires Zn(2+) as cofactor.

The protein resides in the cytoplasm. It catalyses the reaction tRNA(Cys) + L-cysteine + ATP = L-cysteinyl-tRNA(Cys) + AMP + diphosphate. This is Cysteine--tRNA ligase from Moorella thermoacetica (strain ATCC 39073 / JCM 9320).